The following is a 190-amino-acid chain: UPF0301 protein RSc0675 (190 aa).

Belongs to the UPF0301 (AlgH) family.

The sequence is that of UPF0301 protein RSc0675 from Ralstonia nicotianae (strain ATCC BAA-1114 / GMI1000) (Ralstonia solanacearum).